A 3033-amino-acid polypeptide reads, in one-letter code: Genome polyprotein (3033 aa).

Residue Ser-2 is modified to N-acetylserine; by host. The interaction with STAT1 stretch occupies residues 2–23; sequence STNPKPQRKTKRNTNRRPQDVK. An interaction with EIF2AK2/PKR region spans residues 2–58; that stretch reads STNPKPQRKTKRNTNRRPQDVKFPGGGQIVGGVYLLPRRGPRLGVRATRKTSERSQP. Positions 2-59 are interaction with DDX3X; sequence STNPKPQRKTKRNTNRRPQDVKFPGGGQIVGGVYLLPRRGPRLGVRATRKTSERSQPR. The segment at 2-75 is disordered; it reads STNPKPQRKT…PKDRRSAGKS (74 aa). The Cytoplasmic segment spans residues 2 to 168; that stretch reads STNPKPQRKT…EDGINYATGN (167 aa). Short sequence motifs (nuclear localization signal) lie at residues 5–13 and 38–43; these read PKPQRKTKR and PRRGPR. The segment covering 7–16 has biased composition (basic residues); sequence PQRKTKRNTN. The segment covering 32–47 has biased composition (low complexity); sequence GGVYLLPRRGPRLGVR. The residue at position 53 (Ser-53) is a Phosphoserine; by host. 2 consecutive short sequence motifs (nuclear localization signal) follow at residues 58-64 and 66-71; these read PRGRRQP and PKDRRS. Residues Ser-99 and Ser-116 each carry the phosphoserine; by host modification. Residues 112-152 are important for endoplasmic reticulum and mitochondrial localization; that stretch reads PRHRSRNLGKVIDTLTCGFADLMGYIPVVGAPVGGVARALA. The segment at 122-173 is interaction with APOA2; sequence VIDTLTCGFADLMGYIPVVGAPVGGVARALAHGVRVLEDGINYATGNLPGCS. The tract at residues 164-167 is important for lipid droplets localization; it reads YATG. The helical transmembrane segment at 169–189 threads the bilayer; that stretch reads LPGCSFSIFLLALLSCMSVPV. A propeptide spans 178–191 (ER anchor for the core protein, removed in mature form by host signal peptidase); sequence LLALLSCMSVPVSA. The Lumenal portion of the chain corresponds to 190–358; sequence SAVEVKNTSQ…TGAHWGVMFG (169 aa). 3 N-linked (GlcNAc...) asparagine; by host glycosylation sites follow: Asn-196, Asn-209, and Asn-234. The interval 265–296 is important for fusion; sequence IVVSATFCSALYIGDVCGAIMIAAQATIISPQ. A glycan (N-linked (GlcNAc...) asparagine; by host) is linked at Asn-305. A helical transmembrane segment spans residues 359-379; sequence LAYFSMQGAWAKVVVILLLTA. Over 380 to 729 the chain is Lumenal; it reads GVDAQTHTIS…WEWVVLLFLL (350 aa). An HVR1 region spans residues 385 to 412; that stretch reads THTISGHAARTTHGLVSLFTPGSQQNIQ. N-linked (GlcNAc...) (high mannose) asparagine; by host glycosylation is found at Asn-417, Asn-423, and Asn-430. Cystine bridges form between Cys-429–Cys-554, Cys-452–Cys-459, Cys-488–Cys-496, and Cys-505–Cys-510. N-linked (GlcNAc...) asparagine; by host glycosylation is present at Asn-448. Residues 475-480 are HVR2; the sequence is EENVTN. Asn-477 carries N-linked (GlcNAc...) asparagine; by host glycosylation. Positions 482–495 are CD81-binding 1; it reads DNMRPYCWHYPPRP. N-linked (GlcNAc...) asparagine; by host glycosylation is present at Asn-534. The CD81-binding 2 stretch occupies residues 546 to 553; the sequence is PPRGAWFG. The N-linked (GlcNAc...) asparagine; by host glycan is linked to Asn-558. 4 disulfides stabilise this stretch: Cys-566–Cys-571, Cys-585–Cys-589, Cys-601–Cys-624, and Cys-611–Cys-648. N-linked (GlcNAc...) (high mannose) asparagine; by host glycosylation is found at Asn-627 and Asn-649. A disulfide bridge links Cys-656 with Cys-681. The PKR/eIF2-alpha phosphorylation homology domain (PePHD) stretch occupies residues 664–675; the sequence is SQLSPLLHSTTE. The chain crosses the membrane as a helical span at residues 730-750; that stretch reads LADARVCACLWMLLLLGQAEA. At 751 to 761 the chain is on the lumenal side; sequence ALEKLVILHAA. The chain crosses the membrane as a helical span at residues 762–782; sequence SAASSHGMLCFIIFFIAAWYI. Residues 783–786 lie on the Cytoplasmic side of the membrane; it reads KGRV. A helical transmembrane segment spans residues 787–807; the sequence is TPLVTYSYLGMWSFSLLLLAL. Residues 808-817 lie on the Lumenal side of the membrane; it reads PQQAYALDTT. A helical membrane pass occupies residues 818 to 838; that stretch reads EQGQIGLVLLVVISVFTLSPA. The Cytoplasmic segment spans residues 839 to 885; that stretch reads YKILLCRSLWWLSYLLVRAEALIQDWVPPWQARGGRDGIIWAATIFC. The helical transmembrane segment at 886–906 threads the bilayer; it reads PGVLFDITNWLLAILGPGYLL. Positions 903-1030 constitute a Peptidase C18 domain; it reads GYLLRSVLTS…EYTSKGWKLL (128 aa). At 907–932 the chain is on the lumenal side; it reads RSVLTSTPYFVRAQALLRICAAVRHL. The protease NS2-3 stretch occupies residues 908–1210; the sequence is SVLTSTPYFV…PIESLDVIIR (303 aa). Cys-926 carries S-palmitoyl cysteine; by host lipidation. Residues 933–953 traverse the membrane as a helical segment; it reads SGGKYVQMMLLTLGKWTGTYI. Residues 933-953 form an interaction with host SCPS1 region; it reads SGGKYVQMMLLTLGKWTGTYI. At 954-1661 the chain is on the cytoplasmic side; it reads YDHLSPMSGW…CMQADLEIMT (708 aa). Active-site for protease NS2 activity; shared with dimeric partner residues include His-956, Glu-976, and Cys-997. One can recognise a Peptidase S29 domain in the interval 1031-1212; it reads APITAYAQQT…ESLDVIIRSP (182 aa). Catalysis depends on charge relay system; for serine protease NS3 activity residues His-1087 and Asp-1111. Zn(2+)-binding residues include Cys-1127 and Cys-1129. Ser-1169 serves as the catalytic Charge relay system; for serine protease NS3 activity. Positions 1175 and 1179 each coordinate Zn(2+). In terms of domain architecture, Helicase ATP-binding spans 1221–1373; sequence PAVPQTYQVG…PNIEEVALGH (153 aa). An ATP-binding site is contributed by 1234–1241; that stretch reads APTGSGKS. Positions 1241 and 1321 each coordinate Mg(2+). Positions 1320–1323 match the DECH box motif; sequence DECH. Residues 1490 to 1502 are RNA-binding; it reads QRRGRTGRGRLGI. The chain crosses the membrane as a helical span at residues 1662 to 1682; it reads STWVLAGGVLAAIAAYCLATG. The segment at 1683-1694 is NS3-binding; sequence CVVCIGRVNINQ. Residues 1683 to 1809 lie on the Cytoplasmic side of the membrane; sequence CVVCIGRVNI…ALTSPLPTST (127 aa). A helical transmembrane segment spans residues 1810 to 1830; sequence TILLNIMGGWLASQIAPAAGA. The Lumenal segment spans residues 1831–1832; sequence TG. Residues 1833–1853 form a helical membrane-spanning segment; sequence FVVSGLVGAAVGSIGLGKILV. Asp-1854 is a topological domain (cytoplasmic). Residues 1855–1875 traverse the membrane as a helical segment; sequence VLAGYGAGISGALVAFKIMSG. The Lumenal segment spans residues 1876–1885; that stretch reads EKPSVEDVVN. Residues 1886 to 1906 traverse the membrane as a helical segment; that stretch reads LLPGILSPGALVVGVICAAIL. The Cytoplasmic portion of the chain corresponds to 1907–1976; that stretch reads RRHVGQGEGA…WITEDCPVPC (70 aa). The S-palmitoyl cysteine; by host moiety is linked to residue Cys-1976. The stretch at 1977–2007 is an intramembrane region; that stretch reads AGSWLRDIWDWACTILTDFKNWLSTKLLPKM. The Cytoplasmic portion of the chain corresponds to 2008 to 3012; that stretch reads PGLPFISCQR…YHSVSRARPR (1005 aa). Positions 2015, 2033, 2035, and 2056 each coordinate Zn(2+). The interval 2124-2212 is FKBP8-binding; that stretch reads EFFSWVDGVQ…ASSSASQLSA (89 aa). Positions 2124 to 2332 are transcriptional activation; that stretch reads EFFSWVDGVQ…PTPPPRRRRA (209 aa). An interaction with non-structural protein 4A region spans residues 2139–2143; sequence PTPKP. Residues 2193–2212 form a disordered region; the sequence is RLARGSPPSEASSSASQLSA. The segment at 2193–2460 is interaction with host SKP2; the sequence is RLARGSPPSE…ALITPCGPEE (268 aa). Residues Ser-2198, Ser-2201, Ser-2205, Ser-2208, Ser-2211, and Ser-2214 each carry the phosphoserine; by host modification. Positions 2198 to 2212 are enriched in low complexity; sequence SPPSEASSSASQLSA. The interval 2214-2249 is ISDR; that stretch reads SLRATCTAHAKNYAVEMVDANFFMGSDVTRIESETK. The interaction with EIF2AK2/PKR stretch occupies residues 2214–2275; that stretch reads SLRATCTAHA…REPSVPSEYL (62 aa). The NS4B-binding stretch occupies residues 2249 to 2306; sequence KVLILDSLDPSVEEEDEREPSVPSEYLLPKKKFPQALPVWARPDYNPPVVETWKRPDY. The interval 2299–2376 is V3; sequence ETWKRPDYDP…MDTTDATDQP (78 aa). The interval 2308 to 2328 is disordered; the sequence is PPTVSGCALPPRVTAPTPPPR. Positions 2322 to 2325 match the SH3-binding motif; sequence APTP. Residues 2327–2335 carry the Nuclear localization signal motif; it reads PRRRRALVL. Lys-2350 participates in a covalent cross-link: Glycyl lysine isopeptide (Lys-Gly) (interchain with G-Cter in ubiquitin). The tract at residues 2353–2431 is disordered; it reads GQLPPSCDSG…PDLDSGSWST (79 aa). The segment covering 2361 to 2373 has biased composition (polar residues); the sequence is SGRSTGMDTTDAT. Ser-2471 and Ser-2484 each carry phosphoserine; by host. In terms of domain architecture, RdRp catalytic spans 2656 to 2774; it reads PMGFSYDTRC…ISESQGAEED (119 aa). Mg(2+) contacts are provided by Asp-2662, Asp-2760, and Asp-2761. A helical membrane pass occupies residues 3013 to 3033; it reads FLLLCLLLLSVGVGIFLLPAR.

This sequence belongs to the hepacivirus polyprotein family. Homooligomer. Interacts with E1 (via C-terminus). Interacts with the non-structural protein 5A. Interacts (via N-terminus) with host STAT1 (via SH2 domain); this interaction results in decreased STAT1 phosphorylation and ubiquitin-mediated proteasome-dependent STAT1 degradation, leading to decreased IFN-stimulated gene transcription. Interacts with host STAT3; this interaction constitutively activates STAT3. Interacts with host LTBR receptor. Interacts with host TNFRSF1A receptor and possibly induces apoptosis. Interacts with host HNRPK. Interacts with host YWHAE. Interacts with host UBE3A/E6AP. Interacts with host DDX3X. Interacts with host APOA2. Interacts with host RXRA protein. Interacts with host SP110 isoform 3/Sp110b; this interaction sequesters the transcriptional corepressor SP110 away from the nucleus. Interacts with host CREB3 nuclear transcription protein; this interaction triggers cell transformation. Interacts with host ACY3. Interacts with host C1QR1. Interacts with host RBM24; this interaction, which enhances the interaction of the mature core protein with 5'-UTR, may inhibit viral translation and favor replication. Interacts with host EIF2AK2/PKR; this interaction induces the autophosphorylation of EIF2AK2. Part of the viral assembly initiation complex composed of NS2, E1, E2, NS3, NS4A, NS5A and the mature core protein. In terms of assembly, forms a heterodimer with envelope glycoprotein E2. Interacts with mature core protein. Interacts with protease NS2. The heterodimer E1/E2 interacts with host CLDN1; this interaction plays a role in viral entry into host cell. Interacts with host SPSB2 (via C-terminus). Part of the viral assembly initiation complex composed of NS2, E1, E2, NS3, NS4A, NS5A and the mature core protein. Interacts with host NEURL3; this interaction prevents E1 binding to glycoprotein E2. As to quaternary structure, forms a heterodimer with envelope glycoprotein E1. Interacts with host CD81 and SCARB1 receptors; these interactions play a role in viral entry into host cell. Interacts with host EIF2AK2/PKR; this interaction inhibits EIF2AK2 and probably allows the virus to evade the innate immune response. Interacts with host CD209/DC-SIGN and CLEC4M/DC-SIGNR. Interact with host SPCS1; this interaction is essential for viral particle assembly. Interacts with protease NS2. The heterodimer E1/E2 interacts with host CLDN1; this interaction plays a role in viral entry into host cell. Part of the viral assembly initiation complex composed of NS2, E1, E2, NS3, NS4A, NS5A and the mature core protein. Interacts with host SLC3A2/4F2hc; the interaction may facilitate viral entry into host cell. Interacts with human PLSCR1. Homohexamer. Homoheptamer. Interacts with protease NS2. In terms of assembly, homodimer. Interacts with host SPCS1; this interaction is essential for viral particle assembly. Interacts with envelope glycoprotein E1. Interacts with envelope glycoprotein E2. Interacts with viroporin p7. Interacts with serine protease/helicase NS3. Part of the replication complex composed of NS2, NS3, NS4A, NS4B, NS5A and the RNA-directed RNA polymerase embedded in an ER-derived membranous web. Part of the viral assembly initiation complex composed of NS2, E1, E2, NS3, NS4A, NS5A and the mature core protein. As to quaternary structure, interacts with protease NS2. Interacts with non-structural protein 4A; this interaction stabilizes the folding of NS3 serine protease. NS3-NS4A interaction is essential for NS3 activation and allows membrane anchorage of the latter. NS3/NS4A complex also prevents phosphorylation of host IRF3, thus preventing the establishment of dsRNA induced antiviral state. Interacts with host MAVS; this interaction leads to the cleavage and inhibition of host MAVS. Interacts with host TICAM1; this interaction leads to the cleavage and inhibition of host TICAM1. Interacts with host TANK-binding kinase/TBK1; this interaction results in the inhibition of the association between TBK1 and IRF3, which leads to the inhibition of IRF3 activation. Interacts with host RBM24. Part of the replication complex composed of NS2, NS3, NS4A, NS4B, NS5A and the RNA-directed RNA polymerase embedded in an ER-derived membranous web. Part of the viral assembly initiation complex composed of NS2, E1, E2, NS3, NS4A, NS5A and the mature core protein. Interacts with NS3 serine protease; this interaction stabilizes the folding of NS3 serine protease. NS3-NS4A interaction is essential for NS3 activation and allows membrane anchorage of the latter. Interacts with non-structural protein 5A (via N-terminus). Part of the replication complex composed of NS2, NS3, NS4A, NS4B, NS5A and the RNA-directed RNA polymerase embedded in an ER-derived membranous web. Part of the viral assembly initiation complex composed of NS2, E1, E2, NS3, NS4A, NS5A and the mature core protein. In terms of assembly, homomultimer. Interacts with non-structural protein NS5A. Interacts with host PLA2G4C; this interaction likely initiates the recruitment of replication complexes to lipid droplets. Interacts with host STING; this interaction disrupts the interaction between STING and TBK1 thereby suppressing the interferon signaling. Part of the replication complex composed of NS2, NS3, NS4A, NS4B, NS5A and the RNA-directed RNA polymerase embedded in an ER-derived membranous web. As to quaternary structure, monomer. Homodimer; dimerization is required for RNA-binding. Interacts with the mature core protein. Interacts (via N-terminus) with non-structural protein 4A. Interacts with non-structural protein 4B. Interacts (via region D2) with RNA-directed RNA polymerase. Part of the viral assembly initiation complex composed of NS2, E1, E2, NS3, NS4A, NS5A and the mature core protein. Part of the replication complex composed of NS2, NS3, NS4A, NS4B, NS5A and the RNA-directed RNA polymerase embedded in an ER-derived membranous web. Interacts with host GRB2. Interacts with host BIN1. Interacts with host PIK3R1. Interacts with host SRCAP. Interacts with host FKBP8. Interacts (via C-terminus) with host VAPB (via MSP domain). Interacts with host EIF2AK2/PKR; this interaction leads to disruption of EIF2AK2 dimerization by NS5A and probably allows the virus to evade the innate immune response. Interacts (via N-terminus) with host PACSIN2 (via N-terminus); this interaction attenuates protein kinase C alpha-mediated phosphorylation of PACSIN2 by disrupting the interaction between PACSIN2 and PRKCA. Interacts (via N-terminus) with host SRC kinase (via SH2 domain). Interacts with most Src-family kinases. Interacts with host IFI27 and SKP2; promotes the ubiquitin-mediated proteasomal degradation of NS5A. Interacts with host GPS2. Interacts with host TNFRSF21; this interaction allows the modulation by the virus of JNK, p38 MAPK, STAT3, and Akt signaling pathways in a DR6-dependent manner. Interacts (via N-terminus) with host CIDEB (via N-terminus); this interaction seems to regulate the association of HCV particles with APOE. Interacts with host CHKA/Choline Kinase-alpha; CHKA bridges host PI4KA and NS5A and potentiates NS5A-stimulated PI4KA activity, which then facilitates the targeting of the ternary complex to the ER for viral replication. Interacts with host SPSB2 (via C-terminus); this interaction targets NS5A for ubiquitination and degradation. Interacts with host RAB18; this interaction may promote the association of NS5A and other replicase components with lipid droplets. Interacts (via region D2) with host PPIA/CYPA; the interaction stimulates RNA-binding ability of NS5A and is dependent on the peptidyl-prolyl cis-trans isomerase activity of PPIA/CYPA. Interacts with host TRIM14; this interaction induces the degradation of NS5A. Homooligomer. Interacts with non-structural protein 5A. Interacts with host VAPB. Interacts with host PRK2/PKN2. Interacts with host HNRNPA1 and SEPT6; these interactions facilitate viral replication. Part of the replication complex composed of NS2, NS3, NS4A, NS4B, NS5A and the RNA-directed RNA polymerase. Zn(2+) is required as a cofactor. Mg(2+) serves as cofactor. Post-translationally, specific enzymatic cleavages in vivo yield mature proteins. The structural proteins, core, E1, E2 and p7 are produced by proteolytic processing by host signal peptidases. The core protein precursor is synthesized as a 23 kDa, which is retained in the ER membrane through the hydrophobic signal peptide. Cleavage by the signal peptidase releases the 21 kDa mature core protein. The cleavage of the core protein precursor occurs between aminoacids 176 and 188 but the exact cleavage site is not known. Some degraded forms of the core protein appear as well during the course of infection. The other proteins (p7, NS2, NS3, NS4A, NS4B, NS5A and NS5B) are cleaved by the viral proteases. Autoprocessing between NS2 and NS3 is mediated by the NS2 cysteine protease catalytic domain and regulated by the NS3 N-terminal domain. Phosphorylated by host PKC and PKA. In terms of processing, ubiquitinated; mediated by UBE3A and leading to core protein subsequent proteasomal degradation. Post-translationally, highly N-glycosylated. Palmitoylation is required for NS2/3 autoprocessing and E2 recruitment to membranes. In terms of processing, palmitoylated. This modification may play a role in its polymerization or in protein-protein interactions. Post-translationally, phosphorylated on serines in a basal form termed p56. p58 is a hyperphosphorylated form of p56. p56 and p58 coexist in the cell in roughly equivalent amounts. Hyperphosphorylation is dependent on the presence of NS4A. Host CSNK1A1/CKI-alpha or RPS6KB1 kinases may be responsible for NS5A phosphorylation. Tyrosine phosphorylation is essential for the interaction with host SRC. In terms of processing, ubiquitinated. Ubiquitination, most probably at Lys-2350, mediated by host IFI27 and SKP2 leads to proteasomal degradation, restricting viral infection. Ubiquitination by host TRIM22 leads to interruption of viral replication. Post-translationally, the N-terminus is phosphorylated by host PRK2/PKN2.

Its subcellular location is the host endoplasmic reticulum membrane. It localises to the host mitochondrion membrane. The protein resides in the virion. It is found in the host cytoplasm. The protein localises to the host nucleus. Its subcellular location is the host lipid droplet. It localises to the virion membrane. The protein resides in the host mitochondrion. It is found in the host cell membrane. The protein localises to the host perinuclear region. It catalyses the reaction Hydrolysis of four peptide bonds in the viral precursor polyprotein, commonly with Asp or Glu in the P6 position, Cys or Thr in P1 and Ser or Ala in P1'.. The catalysed reaction is a ribonucleoside 5'-triphosphate + H2O = a ribonucleoside 5'-diphosphate + phosphate + H(+). The enzyme catalyses ATP + H2O = ADP + phosphate + H(+). It carries out the reaction RNA(n) + a ribonucleoside 5'-triphosphate = RNA(n+1) + diphosphate. Its activity is regulated as follows. Inhibited by the antiviral drug hexamethylene amiloride. Inhibition by amantadine appears to be genotype-dependent. Also inhibited by long-alkyl-chain iminosugar derivatives. With respect to regulation, activity is up-regulated by PRK2/PKN2-mediated phosphorylation. Functionally, packages viral RNA to form a viral nucleocapsid, and promotes virion budding. Participates in the viral particle production as a result of its interaction with the non-structural protein 5A. Binds RNA and may function as a RNA chaperone to induce the RNA structural rearrangements taking place during virus replication. Modulates viral translation initiation by interacting with viral IRES and 40S ribosomal subunit. Affects various cell signaling pathways, host immunity and lipid metabolism. Prevents the establishment of cellular antiviral state by blocking the interferon-alpha/beta (IFN-alpha/beta) and IFN-gamma signaling pathways and by blocking the formation of phosphorylated STAT1 and promoting ubiquitin-mediated proteasome-dependent degradation of STAT1. Activates STAT3 leading to cellular transformation. Regulates the activity of cellular genes, including c-myc and c-fos. May repress the promoter of p53, and sequester CREB3 and SP110 isoform 3/Sp110b in the cytoplasm. Represses cell cycle negative regulating factor CDKN1A, thereby interrupting an important check point of normal cell cycle regulation. Targets transcription factors involved in the regulation of inflammatory responses and in the immune response: suppresses TNF-induced NF-kappa-B activation, and activates AP-1. Binds to dendritic cells (DCs) via C1QR1, resulting in down-regulation of T-lymphocytes proliferation. Alters lipid metabolism by interacting with hepatocellular proteins involved in lipid accumulation and storage. Induces up-regulation of FAS promoter activity, and thereby contributes to the increased triglyceride accumulation in hepatocytes (steatosis). In terms of biological role, forms a heterodimer with envelope glycoprotein E2, which mediates virus attachment to the host cell, virion internalization through clathrin-dependent endocytosis and fusion with host membrane. Fusion with the host cell is most likely mediated by both E1 and E2, through conformational rearrangements of the heterodimer required for fusion rather than a classical class II fusion mechanism. E1/E2 heterodimer binds host apolipoproteins such as APOB and ApoE thereby forming a lipo-viro-particle (LVP). APOE associated to the LVP allows the initial virus attachment to cell surface receptors such as the heparan sulfate proteoglycans (HSPGs), syndecan-1 (SDC1), syndecan-1 (SDC2), the low-density lipoprotein receptor (LDLR) and scavenger receptor class B type I (SCARB1). The cholesterol transfer activity of SCARB1 allows E2 exposure and binding of E2 to SCARB1 and the tetraspanin CD81. E1/E2 heterodimer binding on CD81 activates the epithelial growth factor receptor (EGFR) signaling pathway. Diffusion of the complex E1-E2-EGFR-SCARB1-CD81 to the cell lateral membrane allows further interaction with Claudin 1 (CLDN1) and occludin (OCLN) to finally trigger HCV entry. Its function is as follows. Forms a heterodimer with envelope glycoprotein E1, which mediates virus attachment to the host cell, virion internalization through clathrin-dependent endocytosis and fusion with host membrane. Fusion with the host cell is most likely mediated by both E1 and E2, through conformational rearrangements of the heterodimer required for fusion rather than a classical class II fusion mechanism. The interaction between envelope glycoprotein E2 and host apolipoprotein E/APOE allows the proper assembly, maturation and infectivity of the viral particles. This interaction is probably promoted via the up-regulation of cellular autophagy by the virus. E1/E2 heterodimer binds host apolipoproteins such as APOB and APOE thereby forming a lipo-viro-particle (LVP). APOE associated to the LVP allows the initial virus attachment to cell surface receptors such as the heparan sulfate proteoglycans (HSPGs), syndecan-1 (SDC1), syndecan-1 (SDC2), the low-density lipoprotein receptor (LDLR) and scavenger receptor class B type I (SCARB1). The cholesterol transfer activity of SCARB1 allows E2 exposure and binding of E2 to SCARB1 and the tetraspanin CD81. E1/E2 heterodimer binding on CD81 activates the epithelial growth factor receptor (EGFR) signaling pathway. Diffusion of the complex E1-E2-EGFR-SCARB1-CD81 to the cell lateral membrane allows further interaction with Claudin 1 (CLDN1) and occludin (OCLN) to finally trigger HCV entry. Inhibits host EIF2AK2/PKR activation, preventing the establishment of an antiviral state. Viral ligand for CD209/DC-SIGN and CLEC4M/DC-SIGNR, which are respectively found on dendritic cells (DCs), and on liver sinusoidal endothelial cells and macrophage-like cells of lymph node sinuses. These interactions allow the capture of circulating HCV particles by these cells and subsequent facilitated transmission to permissive cells such as hepatocytes and lymphocyte subpopulations. The interaction between E2 and host amino acid transporter complex formed by SLC3A2 and SLC7A5/LAT1 may facilitate viral entry into host cell. Ion channel protein that acts as a viroporin and plays an essential role in the assembly, envelopment and secretion of viral particles. Regulates the host cell secretory pathway, which induces the intracellular retention of viral glycoproteins and favors assembly of viral particles. Creates a pore in acidic organelles and releases Ca(2+) and H(+) in the cytoplasm of infected cells, leading to a productive viral infection. High levels of cytoplasmic Ca(2+) may trigger membrane trafficking and transport of viral ER-associated proteins to viroplasms, sites of viral genome replication. This ionic imbalance induces the assembly of the inflammasome complex, which triggers the maturation of pro-IL-1beta into IL-1beta through the action of caspase-1. Targets also host mitochondria and induces mitochondrial depolarization. In addition of its role as a viroporin, acts as a lipid raft adhesion factor. Functionally, cysteine protease required for the proteolytic auto-cleavage between the non-structural proteins NS2 and NS3. The N-terminus of NS3 is required for the function of NS2 protease (active region NS2-3). Promotes the initiation of viral particle assembly by mediating the interaction between structural and non-structural proteins. In terms of biological role, displays three enzymatic activities: serine protease with a chymotrypsin-like fold, NTPase and RNA helicase. NS3 serine protease, in association with NS4A, is responsible for the cleavages of NS3-NS4A, NS4A-NS4B, NS4B-NS5A and NS5A-NS5B. The NS3/NS4A complex prevents phosphorylation of host IRF3, thus preventing the establishment of dsRNA induced antiviral state. The NS3/NS4A complex induces host amino acid transporter component SLC3A2, thus contributing to HCV propagation. NS3 RNA helicase binds to RNA and unwinds both dsDNA and dsRNA in the 3' to 5' direction, and likely resolves RNA complicated stable secondary structures in the template strand. Binds a single ATP and catalyzes the unzipping of a single base pair of dsRNA. Inhibits host antiviral proteins TBK1 and IRF3 thereby preventing the establishment of an antiviral state. Cleaves host MAVS/CARDIF thereby preventing the establishment of an antiviral state. Cleaves host TICAM1/TRIF, thereby disrupting TLR3 signaling and preventing the establishment of an antiviral state. Its function is as follows. Peptide cofactor which forms a non-covalent complex with the N-terminal of NS3 serine protease. The NS3/NS4A complex prevents phosphorylation of host IRF3, thus preventing the establishment of dsRNA induced antiviral state. The NS3/NS4A complex induces host amino acid transporter component SLC3A2, thus contributing to HCV propagation. Induces a specific membrane alteration that serves as a scaffold for the virus replication complex. This membrane alteration gives rise to the so-called ER-derived membranous web that contains the replication complex. NS4B self-interaction contributes to its function in membranous web formation. Promotes host TRIF protein degradation in a CASP8-dependent manner thereby inhibiting host TLR3-mediated interferon signaling. Disrupts the interaction between STING and TBK1 contributing to the inhibition of interferon signaling. Functionally, phosphorylated protein that is indispensable for viral replication and assembly. Both hypo- and hyperphosphorylated states are required for the viral life cycle. The hyperphosphorylated form of NS5A is an inhibitor of viral replication. Involved in RNA-binding and especially in binding to the viral genome. Zinc is essential for RNA-binding. Participates in the viral particle production as a result of its interaction with the mature viral core protein. Its interaction with host VAPB may target the viral replication complex to vesicles. Down-regulates viral IRES translation initiation. Mediates interferon resistance, presumably by interacting with and inhibiting host EIF2AK2/PKR. Prevents BIN1-induced apoptosis. Acts as a transcriptional activator of some host genes important for viral replication when localized in the nucleus. Via the interaction with host PACSIN2, modulates lipid droplet formation in order to promote virion assembly. Modulates TNFRSF21/DR6 signaling pathway for viral propagation. In terms of biological role, RNA-dependent RNA polymerase that performs primer-template recognition and RNA synthesis during viral replication. Initiates RNA transcription/replication at a flavin adenine dinucleotide (FAD), resulting in a 5'- FAD cap on viral RNAs. In this way, recognition of viral 5' RNA by host pattern recognition receptors can be bypassed, thereby evading activation of antiviral pathways. The polypeptide is Genome polyprotein (Hepatitis C virus genotype 2k (isolate VAT96) (HCV)).